The chain runs to 158 residues: NAD(P)H-quinone oxidoreductase subunit J, chloroplastic (158 aa).

Belongs to the complex I 30 kDa subunit family. In terms of assembly, NDH is composed of at least 16 different subunits, 5 of which are encoded in the nucleus.

Its subcellular location is the plastid. The protein resides in the chloroplast thylakoid membrane. The catalysed reaction is a plastoquinone + NADH + (n+1) H(+)(in) = a plastoquinol + NAD(+) + n H(+)(out). It carries out the reaction a plastoquinone + NADPH + (n+1) H(+)(in) = a plastoquinol + NADP(+) + n H(+)(out). In terms of biological role, NDH shuttles electrons from NAD(P)H:plastoquinone, via FMN and iron-sulfur (Fe-S) centers, to quinones in the photosynthetic chain and possibly in a chloroplast respiratory chain. The immediate electron acceptor for the enzyme in this species is believed to be plastoquinone. Couples the redox reaction to proton translocation, and thus conserves the redox energy in a proton gradient. The sequence is that of NAD(P)H-quinone oxidoreductase subunit J, chloroplastic from Drimys granadensis.